The sequence spans 302 residues: Acetaldehyde dehydrogenase (302 aa).

Cysteine 131 functions as the Acyl-thioester intermediate in the catalytic mechanism. NAD(+)-binding positions include 162-170 (SAGPGTRKN) and asparagine 273.

This sequence belongs to the acetaldehyde dehydrogenase family.

It carries out the reaction acetaldehyde + NAD(+) + CoA = acetyl-CoA + NADH + H(+). This chain is Acetaldehyde dehydrogenase, found in Acidovorax sp. (strain JS42).